We begin with the raw amino-acid sequence, 206 residues long: Small ribosomal subunit protein uS4 (206 aa).

The 61-residue stretch at 96 to 156 (GRLDNVVYRM…EKAKKQSRVK (61 aa)) folds into the S4 RNA-binding domain.

This sequence belongs to the universal ribosomal protein uS4 family. Part of the 30S ribosomal subunit. Contacts protein S5. The interaction surface between S4 and S5 is involved in control of translational fidelity.

In terms of biological role, one of the primary rRNA binding proteins, it binds directly to 16S rRNA where it nucleates assembly of the body of the 30S subunit. Its function is as follows. With S5 and S12 plays an important role in translational accuracy. The chain is Small ribosomal subunit protein uS4 from Enterobacter sp. (strain 638).